The sequence spans 115 residues: Large ribosomal subunit protein bL19 (115 aa).

It belongs to the bacterial ribosomal protein bL19 family.

Functionally, this protein is located at the 30S-50S ribosomal subunit interface and may play a role in the structure and function of the aminoacyl-tRNA binding site. The chain is Large ribosomal subunit protein bL19 from Nitratidesulfovibrio vulgaris (strain ATCC 29579 / DSM 644 / CCUG 34227 / NCIMB 8303 / VKM B-1760 / Hildenborough) (Desulfovibrio vulgaris).